Consider the following 493-residue polypeptide: 3-octaprenyl-4-hydroxybenzoate carboxy-lyase (493 aa).

Asn-172 provides a ligand contact to Mn(2+). Residues 175 to 177 (IYR), 189 to 191 (RWL), and 194 to 195 (RG) contribute to the prenylated FMN site. Glu-238 provides a ligand contact to Mn(2+). The active-site Proton donor is the Asp-287.

It belongs to the UbiD family. In terms of assembly, homohexamer. The cofactor is prenylated FMN. It depends on Mn(2+) as a cofactor.

The protein resides in the cell membrane. It carries out the reaction a 4-hydroxy-3-(all-trans-polyprenyl)benzoate + H(+) = a 2-(all-trans-polyprenyl)phenol + CO2. It functions in the pathway cofactor biosynthesis; ubiquinone biosynthesis. In terms of biological role, catalyzes the decarboxylation of 3-octaprenyl-4-hydroxy benzoate to 2-octaprenylphenol, an intermediate step in ubiquinone biosynthesis. The sequence is that of 3-octaprenyl-4-hydroxybenzoate carboxy-lyase from Shewanella pealeana (strain ATCC 700345 / ANG-SQ1).